The following is a 235-amino-acid chain: Large ribosomal subunit protein uL1 (235 aa).

It belongs to the universal ribosomal protein uL1 family. Part of the 50S ribosomal subunit.

In terms of biological role, binds directly to 23S rRNA. The L1 stalk is quite mobile in the ribosome, and is involved in E site tRNA release. Its function is as follows. Protein L1 is also a translational repressor protein, it controls the translation of the L11 operon by binding to its mRNA. This chain is Large ribosomal subunit protein uL1, found in Prochlorococcus marinus (strain MIT 9301).